Reading from the N-terminus, the 457-residue chain is Methylenetetrahydrofolate--tRNA-(uracil-5-)-methyltransferase TrmFO (457 aa).

Residue 12–17 (GGGLAG) participates in FAD binding.

This sequence belongs to the MnmG family. TrmFO subfamily. FAD serves as cofactor.

The protein localises to the cytoplasm. It carries out the reaction uridine(54) in tRNA + (6R)-5,10-methylene-5,6,7,8-tetrahydrofolate + NADH + H(+) = 5-methyluridine(54) in tRNA + (6S)-5,6,7,8-tetrahydrofolate + NAD(+). The catalysed reaction is uridine(54) in tRNA + (6R)-5,10-methylene-5,6,7,8-tetrahydrofolate + NADPH + H(+) = 5-methyluridine(54) in tRNA + (6S)-5,6,7,8-tetrahydrofolate + NADP(+). Catalyzes the folate-dependent formation of 5-methyl-uridine at position 54 (M-5-U54) in all tRNAs. The protein is Methylenetetrahydrofolate--tRNA-(uracil-5-)-methyltransferase TrmFO of Myxococcus xanthus (strain DK1622).